A 317-amino-acid polypeptide reads, in one-letter code: Cyclin-dependent kinase 1 (317 aa).

Positions 7–292 (YQRQEKVGEG…AKRALIHPYF (286 aa)) constitute a Protein kinase domain. ATP contacts are provided by residues 13-21 (VGEGTYGVV) and K37. Residue T17 is modified to Phosphothreonine. Y18 bears the Phosphotyrosine; by SWE1 mark. Catalysis depends on D133, which acts as the Proton acceptor. T166 is subject to Phosphothreonine; by CAK. The interval 296-317 (DDRDHNNYNEDNIGIDKHQNMQ) is disordered.

This sequence belongs to the protein kinase superfamily. CMGC Ser/Thr protein kinase family. CDC2/CDKX subfamily. As to quaternary structure, forms several complexes with cyclins CCN1, CLB2, CLN3, and HGC1. The CDC28-CCN1 complex associates with septin CDC11 upon hyphal induction. Interacts with IQG1, RFA2, and HSP90. Phosphorylated at Tyr-18 by SWE1 in a cell cycle-dependent manner. Yeast-form and hyphal cells display similar dynamics of phosphorylation and dephosphorylation of Tyr-18. Tyr-18 phosphorylation leads to inhibition of CDC28 kinase activity.

The enzyme catalyses L-seryl-[protein] + ATP = O-phospho-L-seryl-[protein] + ADP + H(+). It catalyses the reaction L-threonyl-[protein] + ATP = O-phospho-L-threonyl-[protein] + ADP + H(+). Its activity is regulated as follows. Phosphorylation at Thr-17 or Tyr-18 inactivates the enzyme, while phosphorylation at Thr-166 activates it. Cyclin-dependent kinase that acts as a master regulator of the mitotic and meiotic cell cycles. May drive the G1-S transition. Plays a role in mitotic exit. Plays a role in the expression of morphology-related transcription factors, and especially hyphae-specific genes. Binds distinct cyclin subunits as cells progress through the division cycle or flamentous growth. The CDC28-CLB2 complex regulates cytokinesis partly by phosphorylating the actomyosin ring component IQG1. The CDC28-CLN3 complex phosphorylates SLA1 which regulates cortical actin patch dynamics. The CDC28-CCN1 complex phosphorylates CDC11 and SEC2 upon induction of filamentous growth. The CDC28-HGC1 complex also phosphorylates SEC2 and maintains CDC11 phosphorylation throughout hyphal growth. Moreover, the CDC28-HGC1 complex phosphorylates and prevents RGA2 from localizing to hyphal tips, leading to localized CDC42 activation for hyphal extension. CDC28-HGC1 phosphorylation of EFG1 represses cell separation genes during hyphal growth. Additional substrates for CDC28 are RFA2 in G1-phase; MOB2, which is required for the maintenance of polarisome components and for inhibition of cell separation in hyphae; and GIN4 to regulate its association to SEP7 and subsequent septin ring assembly. The chain is Cyclin-dependent kinase 1 from Candida albicans (strain SC5314 / ATCC MYA-2876) (Yeast).